A 126-amino-acid chain; its full sequence is MQTTMLKAKLHRARVTHSELEYEGSCAIDGSLLDCAGIREYEQIQIYNVNNGERFTTYAIRAADGSGTISVNGAAARLAAVGDIVIICAYVGLNQAELAAYRPNLVYVDENNQITRTSHAIPVQAA.

The active-site Schiff-base intermediate with substrate; via pyruvic acid is Ser-25. The residue at position 25 (Ser-25) is a Pyruvic acid (Ser). Thr-57 lines the substrate pocket. The active-site Proton donor is the Tyr-58. 73 to 75 (GAA) serves as a coordination point for substrate.

This sequence belongs to the PanD family. Heterooctamer of four alpha and four beta subunits. Pyruvate serves as cofactor. Post-translationally, is synthesized initially as an inactive proenzyme, which is activated by self-cleavage at a specific serine bond to produce a beta-subunit with a hydroxyl group at its C-terminus and an alpha-subunit with a pyruvoyl group at its N-terminus.

It localises to the cytoplasm. It carries out the reaction L-aspartate + H(+) = beta-alanine + CO2. Its pathway is cofactor biosynthesis; (R)-pantothenate biosynthesis; beta-alanine from L-aspartate: step 1/1. Catalyzes the pyruvoyl-dependent decarboxylation of aspartate to produce beta-alanine. In Methylococcus capsulatus (strain ATCC 33009 / NCIMB 11132 / Bath), this protein is Aspartate 1-decarboxylase.